We begin with the raw amino-acid sequence, 264 residues long: MSEASHLQERCARQFDVVTLFPEMFDALTKFGISARAQERGIYELALWNPRDFTTDNYRTIDDRPYGGGPGMVMLAEPLEKAIAAAKVRQQSRGVENPRVIHLSPQGVPLKHEHVMQLKDVPGLILLASRYEGVDERLLSTLVDEEYSIGDYVLSGGEIPAMAILDAIIRQLPGSLGDAGSAEEDSFADGLLDCPHYTRPEVYAGQKVPEVLLSGNHAKIKRWRLKQSLARTRARRPDLLAARPLTKEESRLLMEIEQEQDSHN.

149–154 (IGDYVL) contributes to the S-adenosyl-L-methionine binding site.

The protein belongs to the RNA methyltransferase TrmD family. Homodimer.

The protein localises to the cytoplasm. It catalyses the reaction guanosine(37) in tRNA + S-adenosyl-L-methionine = N(1)-methylguanosine(37) in tRNA + S-adenosyl-L-homocysteine + H(+). Functionally, specifically methylates guanosine-37 in various tRNAs. The polypeptide is tRNA (guanine-N(1)-)-methyltransferase (Methylobacillus flagellatus (strain ATCC 51484 / DSM 6875 / VKM B-1610 / KT)).